We begin with the raw amino-acid sequence, 70 residues long: Basic phospholipase A2 2 (70 aa).

The cysteines at positions 28 and 44 are disulfide-linked. Residue His47 is part of the active site. Asp48 lines the Ca(2+) pocket.

The protein belongs to the phospholipase A2 family. Group II subfamily. D49 sub-subfamily. The cofactor is Ca(2+). In terms of tissue distribution, expressed by the venom gland.

The protein localises to the secreted. It catalyses the reaction a 1,2-diacyl-sn-glycero-3-phosphocholine + H2O = a 1-acyl-sn-glycero-3-phosphocholine + a fatty acid + H(+). Functionally, snake venom phospholipase A2 (PLA2) that exhibits strong myotoxicity. PLA2 catalyzes the calcium-dependent hydrolysis of the 2-acyl groups in 3-sn-phosphoglycerides. In Trimeresurus stejnegeri (Chinese green tree viper), this protein is Basic phospholipase A2 2.